The primary structure comprises 146 residues: Chorion class A protein Ld3/Ld29 (146 aa).

The signal sequence occupies residues 1 to 21 (MNTFALLSVFIQACLVQSVFS).

It belongs to the chorion protein family.

Its function is as follows. This protein is one of many from the eggshell of the gypsy moth. The protein is Chorion class A protein Ld3/Ld29 of Lymantria dispar (Gypsy moth).